Consider the following 190-residue polypeptide: Large ribosomal subunit protein uL5 (190 aa).

Belongs to the universal ribosomal protein uL5 family. Part of the 50S ribosomal subunit; contacts the 5S rRNA and probably tRNA. Forms a bridge to the 30S subunit in the 70S ribosome.

In terms of biological role, this is one of the proteins that bind and probably mediate the attachment of the 5S RNA into the large ribosomal subunit, where it forms part of the central protuberance. In the 70S ribosome it contacts protein S13 of the 30S subunit (bridge B1b), connecting the 2 subunits; this bridge is implicated in subunit movement. May contact the P site tRNA; the 5S rRNA and some of its associated proteins might help stabilize positioning of ribosome-bound tRNAs. This is Large ribosomal subunit protein uL5 from Methanocaldococcus jannaschii (strain ATCC 43067 / DSM 2661 / JAL-1 / JCM 10045 / NBRC 100440) (Methanococcus jannaschii).